The following is a 245-amino-acid chain: Tyrosine recombinase XerD-like (245 aa).

Residues 1-72 form the Core-binding (CB) domain; it reads MITFISKFLA…AVNQFLFFLY (72 aa). The Tyr recombinase domain occupies 90-245; it reads PLLTPAYQEV…PVTLEKYFKN (156 aa). Active-site residues include lysine 151 and arginine 210. Tyrosine 242 functions as the O-(3'-phospho-DNA)-tyrosine intermediate in the catalytic mechanism.

The protein belongs to the 'phage' integrase family. XerD-like subfamily.

The protein resides in the cytoplasm. Functionally, putative tyrosine recombinase. Not involved in the cutting and rejoining of the recombining DNA molecules on dif(SL) site. The polypeptide is Tyrosine recombinase XerD-like (Streptococcus mutans serotype c (strain ATCC 700610 / UA159)).